The chain runs to 378 residues: Dual-specificity RNA methyltransferase RlmN (378 aa).

Glu95 (proton acceptor) is an active-site residue. A Radical SAM core domain is found at 101 to 345; that stretch reads EETRGTLCVS…TTIRKTRGDD (245 aa). A disulfide bridge connects residues Cys108 and Cys350. [4Fe-4S] cluster contacts are provided by Cys115, Cys119, and Cys122. S-adenosyl-L-methionine contacts are provided by residues 176–177, Ser208, 230–232, and Asn307; these read GE and SLH. Catalysis depends on Cys350, which acts as the S-methylcysteine intermediate.

Belongs to the radical SAM superfamily. RlmN family. It depends on [4Fe-4S] cluster as a cofactor.

It localises to the cytoplasm. It catalyses the reaction adenosine(2503) in 23S rRNA + 2 reduced [2Fe-2S]-[ferredoxin] + 2 S-adenosyl-L-methionine = 2-methyladenosine(2503) in 23S rRNA + 5'-deoxyadenosine + L-methionine + 2 oxidized [2Fe-2S]-[ferredoxin] + S-adenosyl-L-homocysteine. The catalysed reaction is adenosine(37) in tRNA + 2 reduced [2Fe-2S]-[ferredoxin] + 2 S-adenosyl-L-methionine = 2-methyladenosine(37) in tRNA + 5'-deoxyadenosine + L-methionine + 2 oxidized [2Fe-2S]-[ferredoxin] + S-adenosyl-L-homocysteine. Functionally, specifically methylates position 2 of adenine 2503 in 23S rRNA and position 2 of adenine 37 in tRNAs. m2A2503 modification seems to play a crucial role in the proofreading step occurring at the peptidyl transferase center and thus would serve to optimize ribosomal fidelity. This Burkholderia thailandensis (strain ATCC 700388 / DSM 13276 / CCUG 48851 / CIP 106301 / E264) protein is Dual-specificity RNA methyltransferase RlmN.